The following is a 104-amino-acid chain: Small ribosomal subunit protein uS10 (104 aa).

It belongs to the universal ribosomal protein uS10 family. Part of the 30S ribosomal subunit.

Its function is as follows. Involved in the binding of tRNA to the ribosomes. The sequence is that of Small ribosomal subunit protein uS10 from Aquifex aeolicus (strain VF5).